The chain runs to 88 residues: Phosphocarrier protein HPr (88 aa).

The region spanning 1–88 (MEKKEFHIVA…ETLQKEGLAE (88 aa)) is the HPr domain. Catalysis depends on His15, which acts as the Pros-phosphohistidine intermediate. At Ser46 the chain carries Phosphoserine; by HPrK/P.

Belongs to the HPr family. Monomer.

Its subcellular location is the cytoplasm. Phosphorylation on Ser-46 inhibits the phosphoryl transfer from enzyme I to HPr. Its function is as follows. General (non sugar-specific) component of the phosphoenolpyruvate-dependent sugar phosphotransferase system (sugar PTS). This major carbohydrate active-transport system catalyzes the phosphorylation of incoming sugar substrates concomitantly with their translocation across the cell membrane. The phosphoryl group from phosphoenolpyruvate (PEP) is transferred to the phosphoryl carrier protein HPr by enzyme I. Phospho-HPr then transfers it to the PTS EIIA domain. P-Ser-HPr interacts with the catabolite control protein A (CcpA), forming a complex that binds to DNA at the catabolite response elements cre, operator sites preceding a large number of catabolite-regulated genes. Thus, P-Ser-HPr is a corepressor in carbon catabolite repression (CCR), a mechanism that allows bacteria to coordinate and optimize the utilization of available carbon sources. P-Ser-HPr also plays a role in inducer exclusion, in which it probably interacts with several non-PTS permeases and inhibits their transport activity. This chain is Phosphocarrier protein HPr (ptsH), found in Enterococcus faecalis (strain ATCC 700802 / V583).